The sequence spans 40 residues: Ostricacin-3 (40 aa).

Disulfide bonds link C8-C36, C15-C30, and C20-C37.

It is found in the secreted. In terms of biological role, has antibacterial activity against the Gram-positive bacterium S.aureus 1056 MRSA (MIC=2.78 ug/ml) and the Gram-negative bacterium E.coli O157:H7 (MIC=2.41 ug/ml). Does not have antifungal activity against the yeast C.albicans 3153A. The chain is Ostricacin-3 from Struthio camelus (Common ostrich).